A 1434-amino-acid chain; its full sequence is Pleiotropic drug resistance protein 1 (1434 aa).

A disordered region spans residues 1 to 22; that stretch reads MEPANLSNLRGSSLRGSTRGSL. The ABC transporter 1 domain maps to 161 to 434; that stretch reads LNSLHILSSR…FESMGFKCPQ (274 aa). 194–201 contacts ATP; that stretch reads GPPSSGKT. In terms of domain architecture, ABC transmembrane type-2 1 spans 512 to 725; it reads ELLKVCTERE…SVNSILVNEF (214 aa). A run of 7 helical transmembrane segments spans residues 530–550, 563–583, 618–638, 649–669, 675–695, 702–722, and 760–780; these read FVYM…MTLF, GGIY…NGMS, IPVT…VIGF, FLLL…IGAV, VAST…GFVL, SWWI…SILV, and IGVG…SLAL. The disordered stretch occupies residues 793 to 824; the sequence is LPEDGENAENGEVSSQITSTDGGDSISESQNN. A compositionally biased stretch (polar residues) spans 804-824; that stretch reads EVSSQITSTDGGDSISESQNN. Positions 837-1089 constitute an ABC transporter 2 domain; that stretch reads ITFDDVVYSV…HLIKYFESNP (253 aa). 882–889 is a binding site for ATP; it reads GVSGAGKT. Residues 1162–1376 form the ABC transmembrane type-2 2 domain; sequence TQCVACLWKQ…TLYGLVASQF (215 aa). The next 7 helical transmembrane spans lie at 1181–1201, 1221–1241, 1269–1289, 1296–1316, 1326–1346, 1357–1377, and 1406–1426; these read YTAV…TMFW, YAAV…VVAI, IPYI…MIGF, FFWY…YGMM, VASI…GFII, WYYW…SQFG, and VVAA…AFAI.

Belongs to the ABC transporter superfamily. ABCG family. PDR (TC 3.A.1.205) subfamily.

The protein localises to the membrane. In terms of biological role, may be a general defense protein. This chain is Pleiotropic drug resistance protein 1 (PDR1), found in Nicotiana tabacum (Common tobacco).